A 486-amino-acid chain; its full sequence is Glutamyl-tRNA(Gln) amidotransferase subunit A (486 aa).

Residues lysine 74 and serine 149 each act as charge relay system in the active site. Serine 173 (acyl-ester intermediate) is an active-site residue.

The protein belongs to the amidase family. GatA subfamily. In terms of assembly, heterotrimer of A, B and C subunits.

It catalyses the reaction L-glutamyl-tRNA(Gln) + L-glutamine + ATP + H2O = L-glutaminyl-tRNA(Gln) + L-glutamate + ADP + phosphate + H(+). In terms of biological role, allows the formation of correctly charged Gln-tRNA(Gln) through the transamidation of misacylated Glu-tRNA(Gln) in organisms which lack glutaminyl-tRNA synthetase. The reaction takes place in the presence of glutamine and ATP through an activated gamma-phospho-Glu-tRNA(Gln). The protein is Glutamyl-tRNA(Gln) amidotransferase subunit A of Prochlorococcus marinus (strain SARG / CCMP1375 / SS120).